The sequence spans 742 residues: Feeding circuit activating peptides (742 aa).

The signal sequence occupies residues 1 to 22 (MTFAASFRALLCVLFCAALVHC). The propeptide occupies 23-98 (KTRTKRYVPH…YGALADRDVD (76 aa)). A propeptide spans 117–131 (GSLDAIPQDTDASSD) (connecting peptide). Propeptides lie at residues 164–168 (GSGAE), 202–220 (RGTG…PWGS), 236–253 (DTEL…TEVN), 271–275 (SGEAG), 293–297 (ADDQG), 315–321 (FDNSAGE), 339–341 (AGD), 359–366 (FDNDISGQ), 384–388 (SDQDN), 406–410 (ADDDG), 428–432 (ADEDD), 450–454 (GDEDD), 472–476 (ADEDD), 494–498 (SDEDD), 516–520 (SDEDD), 538–542 (ADEDD), 560–564 (NSPGL), 582–592 (NNEYYSGAENE), 610–614 (DQPGE), and 647–742 (NSAD…AGQM).

Expressed in pleural, pedal, abdominal, buccal and cerebral ganglia.

It localises to the secreted. Its function is as follows. Initiates organized rhythmic motor output of feeding circuit. The polypeptide is Feeding circuit activating peptides (Aplysia californica (California sea hare)).